We begin with the raw amino-acid sequence, 660 residues long: Acetyl-coenzyme A synthetase (660 aa).

CoA is bound by residues 197-200 and T317; that span reads RGGK. ATP contacts are provided by residues 397–399, 421–426, D512, and R528; these read GEP and DTWWQT. S536 provides a ligand contact to CoA. Position 539 (R539) interacts with ATP. Positions 550 and 555 each coordinate Mg(2+). Residue K625 is modified to N6-acetyllysine.

It belongs to the ATP-dependent AMP-binding enzyme family. Mg(2+) serves as cofactor. Post-translationally, acetylated. Deacetylation by the SIR2-homolog deacetylase activates the enzyme.

The catalysed reaction is acetate + ATP + CoA = acetyl-CoA + AMP + diphosphate. In terms of biological role, catalyzes the conversion of acetate into acetyl-CoA (AcCoA), an essential intermediate at the junction of anabolic and catabolic pathways. AcsA undergoes a two-step reaction. In the first half reaction, AcsA combines acetate with ATP to form acetyl-adenylate (AcAMP) intermediate. In the second half reaction, it can then transfer the acetyl group from AcAMP to the sulfhydryl group of CoA, forming the product AcCoA. The sequence is that of Acetyl-coenzyme A synthetase from Paraburkholderia phymatum (strain DSM 17167 / CIP 108236 / LMG 21445 / STM815) (Burkholderia phymatum).